We begin with the raw amino-acid sequence, 332 residues long: Anthranilate phosphoribosyltransferase (332 aa).

5-phospho-alpha-D-ribose 1-diphosphate-binding positions include glycine 79, 82-83 (GD), threonine 87, 89-92 (NIST), 107-115 (KHGNRSVSS), and serine 119. Glycine 79 lines the anthranilate pocket. Serine 91 is a Mg(2+) binding site. Anthranilate is bound at residue asparagine 110. Arginine 165 lines the anthranilate pocket. Mg(2+)-binding residues include aspartate 223 and glutamate 224.

It belongs to the anthranilate phosphoribosyltransferase family. As to quaternary structure, homodimer. The cofactor is Mg(2+).

It catalyses the reaction N-(5-phospho-beta-D-ribosyl)anthranilate + diphosphate = 5-phospho-alpha-D-ribose 1-diphosphate + anthranilate. The protein operates within amino-acid biosynthesis; L-tryptophan biosynthesis; L-tryptophan from chorismate: step 2/5. Its function is as follows. Catalyzes the transfer of the phosphoribosyl group of 5-phosphorylribose-1-pyrophosphate (PRPP) to anthranilate to yield N-(5'-phosphoribosyl)-anthranilate (PRA). The polypeptide is Anthranilate phosphoribosyltransferase (Vibrio parahaemolyticus serotype O3:K6 (strain RIMD 2210633)).